We begin with the raw amino-acid sequence, 471 residues long: MTWLTAFKDKNIVVLGAGMTGLSCLRFLHAQDLSFAVNDSRPMPFANRDEQTQYENDYPKAKFVFGQWQQSLISSADIIITSPGIDLVSEGITALIPENCLVIGDVELFCLVNNSRISPMKMLAVTGSNGKSTVVSLLASLAKAIGVNAALAGNIGEPILNLLHRENVYNSQLANQPDIVIVELSSFQLETLSSMHAIAASVLNLSDDHLDRHKTLANYQAIKQSIYPQAKIAVVSREDQASNTLVAAQEIISFGLNKPEQDCFGLQAIDNKMVMMFGEQALISIDELPLAGMHNALNYMAALALGYSAGWSLSAMTENLAGFMGLAHRCQRVASEDYIQWINDSKATNVGATLAAITGLVPTLTGQNKLILIAGGDGKGADFSALTTILNCDVNQLITLGKDGAEIASLVSDAIQVDTLREAVEQAKQIAKPGDMVLLSPACASIDMFKNYQVRGEQFIAAVQAKEDSCR.

Residue 127–133 (GSNGKST) coordinates ATP.

Belongs to the MurCDEF family.

The protein resides in the cytoplasm. It catalyses the reaction UDP-N-acetyl-alpha-D-muramoyl-L-alanine + D-glutamate + ATP = UDP-N-acetyl-alpha-D-muramoyl-L-alanyl-D-glutamate + ADP + phosphate + H(+). It participates in cell wall biogenesis; peptidoglycan biosynthesis. Cell wall formation. Catalyzes the addition of glutamate to the nucleotide precursor UDP-N-acetylmuramoyl-L-alanine (UMA). In Colwellia psychrerythraea (strain 34H / ATCC BAA-681) (Vibrio psychroerythus), this protein is UDP-N-acetylmuramoylalanine--D-glutamate ligase.